The primary structure comprises 476 residues: Glycogen synthase (476 aa).

An ADP-alpha-D-glucose-binding site is contributed by lysine 15.

The protein belongs to the glycosyltransferase 1 family. Bacterial/plant glycogen synthase subfamily.

It carries out the reaction [(1-&gt;4)-alpha-D-glucosyl](n) + ADP-alpha-D-glucose = [(1-&gt;4)-alpha-D-glucosyl](n+1) + ADP + H(+). The protein operates within glycan biosynthesis; glycogen biosynthesis. Synthesizes alpha-1,4-glucan chains using ADP-glucose. The sequence is that of Glycogen synthase from Haemophilus influenzae (strain 86-028NP).